The primary structure comprises 201 residues: Adenylyl-sulfate kinase (201 aa).

ATP is bound at residue 35-42 (GLSGSGKS). The active-site Phosphoserine intermediate is S109.

This sequence belongs to the APS kinase family.

It catalyses the reaction adenosine 5'-phosphosulfate + ATP = 3'-phosphoadenylyl sulfate + ADP + H(+). It functions in the pathway sulfur metabolism; hydrogen sulfide biosynthesis; sulfite from sulfate: step 2/3. Catalyzes the synthesis of activated sulfate. The chain is Adenylyl-sulfate kinase from Prochlorococcus marinus (strain SARG / CCMP1375 / SS120).